Reading from the N-terminus, the 85-residue chain is Cell division topological specificity factor (85 aa).

It belongs to the MinE family.

Prevents the cell division inhibition by proteins MinC and MinD at internal division sites while permitting inhibition at polar sites. This ensures cell division at the proper site by restricting the formation of a division septum at the midpoint of the long axis of the cell. This Thioalkalivibrio sulfidiphilus (strain HL-EbGR7) protein is Cell division topological specificity factor.